Consider the following 69-residue polypeptide: Beta-defensin 11 (69 aa).

The signal sequence occupies residues 1 to 23 (MRTLCSLLLIGCLLFSYDTPVVG). Intrachain disulfides connect Cys35/Cys64, Cys42/Cys57, and Cys47/Cys65.

It belongs to the beta-defensin family.

It is found in the secreted. Functionally, has antibacterial activity. The sequence is that of Beta-defensin 11 (Defb11) from Rattus norvegicus (Rat).